A 741-amino-acid chain; its full sequence is NAD(P)H-quinone oxidoreductase subunit 5, chloroplastic (741 aa).

16 helical membrane-spanning segments follow: residues 9–29 (WIIPFLPLPVPMLIGLGLLLF), 40–60 (WAFQSVLLLSIVMIFSINLSI), 89–109 (IDPLTSIMSILITTVGILVLI), 125–145 (FAYMSFFSTSMLGLVTSSNLI), 147–167 (IYIFWELVGMCSYLLIGFWFT), 185–205 (GDFGLLLGILGFYWITGSFEF), 219–239 (NEVNFFFVTLCAVLLFGGAIA), 258–278 (TPISALIRAATMVAAGIFLVA), 283–303 (LFIVIPHIMNFISLIGIITVF), 327–347 (LGYMMLALGMGSYRSALFHLI), 354–374 (ALLFLGSGSVIHSMETLVGYC), 396–416 (NSFLLGTLSLCGIPPLACFWS), 425–445 (WLYSPIFATIAWSTAGLTAFY), 549–569 (LFPILILIIFTLFVGFLGIHF), 605–625 (VFSVSIASFGIFIAFFLYKPV), and 721–741 (YLFFYFSYVSIFLLIYYFVNL).

It belongs to the complex I subunit 5 family. NDH is composed of at least 16 different subunits, 5 of which are encoded in the nucleus.

Its subcellular location is the plastid. The protein resides in the chloroplast thylakoid membrane. It catalyses the reaction a plastoquinone + NADH + (n+1) H(+)(in) = a plastoquinol + NAD(+) + n H(+)(out). It carries out the reaction a plastoquinone + NADPH + (n+1) H(+)(in) = a plastoquinol + NADP(+) + n H(+)(out). In terms of biological role, NDH shuttles electrons from NAD(P)H:plastoquinone, via FMN and iron-sulfur (Fe-S) centers, to quinones in the photosynthetic chain and possibly in a chloroplast respiratory chain. The immediate electron acceptor for the enzyme in this species is believed to be plastoquinone. Couples the redox reaction to proton translocation, and thus conserves the redox energy in a proton gradient. In Pentatrichia integra (Rock-climbing daisy), this protein is NAD(P)H-quinone oxidoreductase subunit 5, chloroplastic (ndhF).